Consider the following 437-residue polypeptide: Probable cysteine desulfurase (437 aa).

Position 258 is an N6-(pyridoxal phosphate)lysine (Lys-258).

Belongs to the class-V pyridoxal-phosphate-dependent aminotransferase family. Csd subfamily. The cofactor is pyridoxal 5'-phosphate.

It carries out the reaction (sulfur carrier)-H + L-cysteine = (sulfur carrier)-SH + L-alanine. Its function is as follows. Catalyzes the removal of elemental sulfur and selenium atoms from L-cysteine, L-cystine, L-selenocysteine, and L-selenocystine to produce L-alanine. The sequence is that of Probable cysteine desulfurase (csd) from Haemophilus influenzae (strain ATCC 51907 / DSM 11121 / KW20 / Rd).